The primary structure comprises 341 residues: Eukaryotic translation initiation factor 3 subunit I (341 aa).

WD repeat units lie at residues 8–49 (GHER…GTYR), 50–91 (GHQG…KTWD), 135–184 (QSDE…LLYN), 189–228 (ELNQPITDLQWSQDRTYFITASKDKTSKLISSKDLEVLKS), and 286–325 (GHFGPLNTVAADPTGKGYASGGEDGYVRVHAFDKGYYDFL).

This sequence belongs to the eIF-3 subunit I family. Component of the eukaryotic translation initiation factor 3 (eIF-3) complex.

The protein resides in the cytoplasm. In terms of biological role, component of the eukaryotic translation initiation factor 3 (eIF-3) complex, which is involved in protein synthesis of a specialized repertoire of mRNAs and, together with other initiation factors, stimulates binding of mRNA and methionyl-tRNAi to the 40S ribosome. The eIF-3 complex specifically targets and initiates translation of a subset of mRNAs involved in cell proliferation. In Chaetomium globosum (strain ATCC 6205 / CBS 148.51 / DSM 1962 / NBRC 6347 / NRRL 1970) (Soil fungus), this protein is Eukaryotic translation initiation factor 3 subunit I.